The sequence spans 443 residues: Nuclear hormone receptor family member nhr-60 (443 aa).

A compositionally biased stretch (low complexity) spans 1–20 (MIQSSSSISQDSLDLPSILS). Positions 1–40 (MIQSSSSISQDSLDLPSILSTFSADEPEDEPSPTAVKSTK) are disordered. Positions 44–121 (PTECLICGNS…VGMNPLAMEV (78 aa)) form a DNA-binding region, nuclear receptor. 2 NR C4-type zinc fingers span residues 47-67 (CLIC…CNGC) and 83-104 (CKAK…CRAC). One can recognise an NR LBD domain in the interval 196-439 (NEFSGLEYLL…KDLVMRVIED (244 aa)). The segment at 225 to 249 (LRRDQLGPPRLPKPPSPGKPRDSQH) is disordered. A compositionally biased stretch (pro residues) spans 233–242 (PRLPKPPSPG).

The protein belongs to the nuclear hormone receptor family.

Its subcellular location is the nucleus. Functionally, orphan nuclear receptor (Potential). Required for embryonic and larval morphogenesis and probably for seam cell positioning and migration. This Caenorhabditis elegans protein is Nuclear hormone receptor family member nhr-60.